A 168-amino-acid chain; its full sequence is Secretory-abundant heat soluble protein 33020 (168 aa).

A signal peptide spans 1-19; it reads MARFLVALALFGVVAMTAA. Residues 26–57 form an SAHS-c1 region; it reads EWSGKPWLGKFVAEVSDKSENWEAFVDALGLP. Residues 72-100 form an SAHS-c2 region; it reads YKQGEHYHHILSLPDKNINKDIEFTLGQE. Residues 113–162 are SAHS-c3; it reads KYFEDGNKLVADVSIPAKGKSIHDVYDVQGDQLIKSYKVGDVVAKKWFKK.

The protein belongs to the Secretory-abundant heat soluble protein (SAHS) family.

The protein resides in the secreted. Functionally, secreted heat soluble protein acting as a molecular shield in water-deficient condition. Tardigrade-specific intrinsically disordered proteins (TDPs) are essential for desiccation tolerance by forming non-crystalline amorphous solids upon desiccation, and this vitrified state mirrors their protective capabilities. The sequence is that of Secretory-abundant heat soluble protein 33020 from Hypsibius exemplaris (Freshwater tardigrade).